A 181-amino-acid chain; its full sequence is Large ribosomal subunit protein uL5 (181 aa).

Belongs to the universal ribosomal protein uL5 family. As to quaternary structure, part of the 50S ribosomal subunit; part of the 5S rRNA/L5/L18/L25 subcomplex. Contacts the 5S rRNA and the P site tRNA. Forms a bridge to the 30S subunit in the 70S ribosome.

Its function is as follows. This is one of the proteins that bind and probably mediate the attachment of the 5S RNA into the large ribosomal subunit, where it forms part of the central protuberance. In the 70S ribosome it contacts protein S13 of the 30S subunit (bridge B1b), connecting the 2 subunits; this bridge is implicated in subunit movement. Contacts the P site tRNA; the 5S rRNA and some of its associated proteins might help stabilize positioning of ribosome-bound tRNAs. This is Large ribosomal subunit protein uL5 from Nitrosococcus oceani (strain ATCC 19707 / BCRC 17464 / JCM 30415 / NCIMB 11848 / C-107).